Here is a 444-residue protein sequence, read N- to C-terminus: Ribosomal protein uS12 methylthiotransferase RimO (444 aa).

The 117-residue stretch at 2 to 118 (PSIGLLSLGC…IVEVVNHALE (117 aa)) folds into the MTTase N-terminal domain. [4Fe-4S] cluster-binding residues include Cys11, Cys47, Cys81, Cys156, Cys160, and Cys163. The Radical SAM core domain occupies 142–372 (STPSYTAYVK…MKLQREISLS (231 aa)). In terms of domain architecture, TRAM spans 375-444 (QKRIGQEIEV…EYDLMGELAQ (70 aa)).

The protein belongs to the methylthiotransferase family. RimO subfamily. It depends on [4Fe-4S] cluster as a cofactor.

The protein localises to the cytoplasm. It carries out the reaction L-aspartate(89)-[ribosomal protein uS12]-hydrogen + (sulfur carrier)-SH + AH2 + 2 S-adenosyl-L-methionine = 3-methylsulfanyl-L-aspartate(89)-[ribosomal protein uS12]-hydrogen + (sulfur carrier)-H + 5'-deoxyadenosine + L-methionine + A + S-adenosyl-L-homocysteine + 2 H(+). Catalyzes the methylthiolation of an aspartic acid residue of ribosomal protein uS12. The polypeptide is Ribosomal protein uS12 methylthiotransferase RimO (Desulforamulus reducens (strain ATCC BAA-1160 / DSM 100696 / MI-1) (Desulfotomaculum reducens)).